The chain runs to 663 residues: MGVYRIRVSTGDSVYAGSNNEVYLWLIGQHGEASLGKLFRPCRNSEAEFKVDVSEYLGPLLFVRVQKWHYLKEDAWFCNWISVKGPGDQGSEYTFPCYRWVQGTSILNLPEGTGCTVVEDSQGLFRNHREEELEERRSLYRWGNWKDGTILNVAATSISDLPVDQRFREDKRLEFEASQVLGTMDTVINFPKNTVTCWKSLDDFNYVFKSGHTKMAERVRNSWKEDAFFGYQFLNGANPMVLKRSTCLPARLVFPPGMEKLQAQLDEELKKGTLFEADFFLLDGIKANVILCSQQYLAAPLVMLKLQPDGQLLPIAIQLELPKTGSTPPPIFTPLDPPMDWLLAKCWVRSSDLQLHELQAHLLRGHLVAEVFAVATMRCLPSVHPVFKLLVPHLLYTMEINVRARSDLISERGFFDKVMSTGGGGHLDLLKQAGAFLTYSSLCPPDDLAERGLLDIDTCFYAKDALQLWQVMNRYVVGMFDLYYKTDQAVQDDYELQSWCQEITEIGLQGAQDRGFPTSLQSRAQACHFITMCIFTCTAQHSSIHLGQLDWFYWVPNAPCTMRLPPPKTKDATMEKLMATLPNPNQSTLQINVVWLLGRRQAVMVPLGQHSEEHFPNPEAKAVLKKFREELAALDKEIEIRNKSLDIPYEYLRPSLVENSVAI.

In terms of domain architecture, PLAT spans 2 to 115 (GVYRIRVSTG…ILNLPEGTGC (114 aa)). A Lipoxygenase domain is found at 116–663 (TVVEDSQGLF…PSLVENSVAI (548 aa)). Residues histidine 361, histidine 366, histidine 541, histidine 545, and isoleucine 663 each contribute to the Fe cation site.

The protein belongs to the lipoxygenase family. In terms of assembly, interacts with PEBP1; in response to IL13/interleukin-13, prevents the interaction of PEBP1 with RAF1 to activate the ERK signaling cascade. It depends on Fe cation as a cofactor. As to expression, found in pituitary and pineal glands as well as leukocytes, kidney, aorta, small intestine and cornea. Also expressed by resident peritoneal macrophages (at protein level).

It is found in the cytoplasm. It localises to the cytosol. Its subcellular location is the cell membrane. The protein localises to the lipid droplet. It catalyses the reaction (5Z,8Z,11Z,14Z)-eicosatetraenoate + O2 = (12S)-hydroperoxy-(5Z,8Z,10E,14Z)-eicosatetraenoate. It carries out the reaction (5Z,8Z,11Z,14Z)-eicosatetraenoate + O2 = (15S)-hydroperoxy-(5Z,8Z,11Z,13E)-eicosatetraenoate. The enzyme catalyses (9Z,12Z)-octadecadienoate + O2 = (13S)-hydroperoxy-(9Z,11E)-octadecadienoate. The catalysed reaction is (5Z,8Z,11Z,14Z)-eicosatetraenoate + 2 O2 = (14R,15S)-dihydroperoxy-(5Z,8Z,10E,12E)-eicosatetraenoate. It catalyses the reaction (5Z,8Z,11Z,14Z)-eicosatetraenoate + 2 O2 = (8S,15S)-dihydroperoxy-(5Z,9E,11Z,13E)-eicosatetraenoate. It carries out the reaction (14S,15R)-epoxy-(5Z,8Z,11Z)-eicosatrienoate + O2 = (8S)-hydroperoxy-(14S,15R)-epoxy-(5Z,9E,11Z)-eicosatrienoate. The enzyme catalyses (14S,15R)-epoxy-(5Z,8Z,11Z)-eicosatrienoate + O2 = (12S)-hydroperoxy-(14S,15R)-epoxy-(5Z,8Z,10E)-eicosatrienoate. The catalysed reaction is (14R,15S)-epoxy-(5Z,8Z,11Z)-eicosatrienoate + O2 = (5S)-hydroperoxy-(14R,15S)-epoxy-(6E,8Z,11Z)-eicosatrienoate. It catalyses the reaction (14R,15S)-epoxy-(5Z,8Z,11Z)-eicosatrienoate + O2 = (12S)-hydroperoxy-(14R,15S)-epoxy-(5Z,8Z,10E)-eicosatrienoate. It carries out the reaction (15R)-hydroperoxy-(5Z,8Z,11Z,13E)-eicosatetraenoate = 15-oxo-(5Z,8Z,11Z,13E)-eicosatetraenoate + H2O. The enzyme catalyses (15S)-hydroperoxy-(5Z,8Z,11Z,13E)-eicosatetraenoate = (14S,15S)-epoxy-(5Z,8Z,10E,12E)-eicosatetraenoate + H2O. The catalysed reaction is (12S)-hydroperoxy-(5Z,8Z,10E,14Z)-eicosatetraenoate = (8S)-hydroxy-(11S,12S)-epoxy-(5Z,9E,14Z)-eicosatrienoate. It catalyses the reaction (4Z,7Z,10Z,13Z,16Z)-docosapentaenoate + O2 = 14-hydroperoxy-(4Z,7Z,10Z,12E,16Z)-docosapentaenoate. It carries out the reaction (7Z,10Z,13Z,16Z,19Z)-docosapentaenoate + O2 = 14-hydroperoxy-(7Z,10Z,12E,16Z,19Z)-docosapentaenoate. The enzyme catalyses (4Z,7Z,10Z,13Z,16Z,19Z)-docosahexaenoate + O2 = (14S)-hydroperoxy-(4Z,7Z,10Z,12E,16Z,19Z)-docosahexaenoate. The catalysed reaction is (4Z,7Z,10Z,13Z,16Z,19Z)-docosahexaenoate + O2 = (17S)-hydroperoxy-(4Z,7Z,10Z,13Z,15E,19Z)-docosahexaenoate. It catalyses the reaction (7S)-hydroperoxy-(4Z,8E,10Z,13Z,16Z,19Z)-docosahexaenoate + O2 = (7S,14S)-dihydroperoxy-(4Z,8E,10Z,12E,16Z,19Z)-docosahexaenoate. It carries out the reaction (7S)-hydroperoxy-(4Z,8E,10Z,13Z,16Z,19Z)-docosahexaenoate + O2 = (7S,17S)-dihydroperoxy-(4Z,8E,10Z,13Z,15E,19Z)-docosahexaenoate. The enzyme catalyses (4Z,7Z,10Z,13Z,16Z,19Z)-docosahexaenoate + O2 = (11S)-hydroperoxy-(4Z,7Z,9E,13Z,16Z,19Z)-docosahexaenoate. The catalysed reaction is N-(5Z,8Z,11Z,14Z)-eicosatetraenoyl-taurine + O2 = N-(12S)-hydroperoxy-(5Z,8Z,10E,14Z)-eicosatetraenoyl-taurine. It catalyses the reaction N-(5Z,8Z,11Z,14Z)-eicosatetraenoyl-gamma-aminobutanoate + O2 = N-(12S)-hydroperoxy-(5Z,8Z,10E,14Z)-eicosatetraenoyl-gamma-aminobutanoate. It carries out the reaction N-(5Z,8Z,11Z,14Z)-eicosatetraenoyl-glycine + O2 = N-(12S)-hydroperoxy-(5Z,8Z,10E,14Z)-eicosatetraenoyl-glycine. The enzyme catalyses N-(5Z,8Z,11Z,14Z)-eicosatetraenoyl-L-alanine + O2 = N-(12S)-hydroperoxy-(5Z,8Z,10E,14Z)-eicosatetraenoyl-alanine. The catalysed reaction is N-(5Z,8Z,11Z,14Z)-eicosatetraenoyl-taurine + O2 = N-(15S)-hydroperoxy-(5Z,8Z,11Z,13E)-eicosatetraenoyl-taurine. It catalyses the reaction N-(5Z,8Z,11Z,14Z)-eicosatetraenoyl-gamma-aminobutanoate + O2 = N-(15S)-hydroperoxy-(5Z,8Z,11Z,13E)-eicosatetraenoyl-gamma-aminobutanoate. It carries out the reaction N-(5Z,8Z,11Z,14Z)-eicosatetraenoyl-glycine + O2 = N-(15S)-hydroperoxy-(5Z,8Z,11Z,13E)-eicosatetraenoyl-glycine. The enzyme catalyses N-(5Z,8Z,11Z,14Z)-eicosatetraenoyl-L-alanine + O2 = N-(15S)-hydroperoxy-(5Z,8Z,11Z,13E)-eicosatetraenoyl-alanine. Its pathway is lipid metabolism; hydroperoxy eicosatetraenoic acid biosynthesis. Functionally, non-heme iron-containing dioxygenase that catalyzes the stereo-specific peroxidation of free and esterified polyunsaturated fatty acids generating a spectrum of bioactive lipid mediators. It inserts peroxyl groups at C12 or C15 of arachidonate ((5Z,8Z,11Z,14Z)-eicosatetraenoate) producing both 12-hydroperoxyeicosatetraenoate/12-HPETE and 15-hydroperoxyeicosatetraenoate/15-HPETE. It may then act on 12-HPETE to produce hepoxilins, which may show pro-inflammatory properties. Can also peroxidize linoleate ((9Z,12Z)-octadecadienoate) to 13-hydroperoxyoctadecadienoate. May participate in the sequential oxidations of DHA ((4Z,7Z,10Z,13Z,16Z,19Z)-docosahexaenoate) to generate specialized pro-resolving mediators (SPMs)like resolvin D5 ((7S,17S)-diHPDHA) and (7S,14S)-diHPDHA, that actively down-regulate the immune response and have anti-aggregation properties with platelets. Can convert epoxy fatty acids to hydroperoxy-epoxides derivatives followed by an intramolecular nucleophilic substitution leading to the formation of monocyclic endoperoxides. Plays an important role during the maintenance of self-tolerance by peroxidizing membrane-bound phosphatidylethanolamine which can then signal the sorting process for clearance of apoptotic cells during inflammation and prevent an autoimmune response. In addition to its role in the immune and inflammatory responses, this enzyme may play a role in epithelial wound healing in the cornea through production of lipoxin A4 (LXA(4)) and docosahexaenoic acid-derived neuroprotectin D1 (NPD1; 10R,17S-HDHA), both lipid autacoids exhibit anti-inflammatory and neuroprotective properties. Furthermore, it may regulate actin polymerization which is crucial for several biological processes such as the phagocytosis of apoptotic cells. It is also implicated in the generation of endogenous ligands for peroxisome proliferator activated receptor (PPAR-gamma), hence modulating macrophage development and function. It may also exert a negative effect on skeletal development by regulating bone mass through this pathway. As well as participates in ER stress and downstream inflammation in adipocytes, pancreatic islets, and liver. Finally, it is also involved in the cellular response to IL13/interleukin-13. The polypeptide is Polyunsaturated fatty acid lipoxygenase ALOX15 (Mus musculus (Mouse)).